The following is a 205-amino-acid chain: Protein GrpE (205 aa).

Basic and acidic residues predominate over residues 1–18 (MSEEVKNSVETEENKASK). Residues 1-60 (MSEEVKNSVETEENKASKDNATQAPNPTENHNTAQETEKAENSEKTESATQENESLDKLK) form a disordered region. Residues 19–35 (DNATQAPNPTENHNTAQ) are compositionally biased toward polar residues. The span at 36 to 47 (ETEKAENSEKTE) shows a compositional bias: basic and acidic residues.

It belongs to the GrpE family. Homodimer.

The protein resides in the cytoplasm. Participates actively in the response to hyperosmotic and heat shock by preventing the aggregation of stress-denatured proteins, in association with DnaK and GrpE. It is the nucleotide exchange factor for DnaK and may function as a thermosensor. Unfolded proteins bind initially to DnaJ; upon interaction with the DnaJ-bound protein, DnaK hydrolyzes its bound ATP, resulting in the formation of a stable complex. GrpE releases ADP from DnaK; ATP binding to DnaK triggers the release of the substrate protein, thus completing the reaction cycle. Several rounds of ATP-dependent interactions between DnaJ, DnaK and GrpE are required for fully efficient folding. This Chloroherpeton thalassium (strain ATCC 35110 / GB-78) protein is Protein GrpE.